Consider the following 401-residue polypeptide: Phosrestin-1 (401 aa).

It belongs to the arrestin family.

In terms of biological role, directly interacts with light-activated rhodopsin thereby activating the phosphorylation of metarhodopsin. Inhibits the dephosphorylation of metarhodopsin. The polypeptide is Phosrestin-1 (ARR2) (Calliphora vicina (Blue blowfly)).